The chain runs to 284 residues: uncharacterized protein (284 aa).

A helical membrane pass occupies residues 12–32 (ILFILFVVAFCVYLVPRVAIN).

Belongs to the serine esterase family.

Its subcellular location is the membrane. This is an uncharacterized protein from Escherichia coli O157:H7.